The chain runs to 421 residues: MQDSIEQYMQKVGQQARDASRVLTSASTSLKNHALSAIYTALENNQAAILAANQIDMEKGRSNQLDSALLDRLELTPARFKGMLQGLKDVIVLVDPIGEITDLAYRPTGIQIGKMRVPLGVVGMIYESRPNVTLEAASLAIKSGNAIILRGGSEALESNKAIAEAVKHGLKVAGLPEHSVQVIETSDRGAVGHLITMAEYVDVIVPRGGKSLIERVTNEARIPVIKHLDGNCHVFVEAQADLQKALPITLNAKTHRYGVCNAMETLLVDEKIAEVFLPHIAELYAEKQVELRGCPETRRILGSSVKPATEEDWYTEYLGPILAVKVVSGIDEAIDHINKYGSHHTDAIVTENYTLARQFLARVDSSSVVVNASTRFADGFEYGLGAEIGISTDKIHARGPVGLEGLTSQKWIVLGDGQIRQ.

Belongs to the gamma-glutamyl phosphate reductase family.

Its subcellular location is the cytoplasm. The catalysed reaction is L-glutamate 5-semialdehyde + phosphate + NADP(+) = L-glutamyl 5-phosphate + NADPH + H(+). Its pathway is amino-acid biosynthesis; L-proline biosynthesis; L-glutamate 5-semialdehyde from L-glutamate: step 2/2. Its function is as follows. Catalyzes the NADPH-dependent reduction of L-glutamate 5-phosphate into L-glutamate 5-semialdehyde and phosphate. The product spontaneously undergoes cyclization to form 1-pyrroline-5-carboxylate. This Acinetobacter baumannii (strain ATCC 17978 / DSM 105126 / CIP 53.77 / LMG 1025 / NCDC KC755 / 5377) protein is Gamma-glutamyl phosphate reductase.